The primary structure comprises 220 residues: ATP phosphoribosyltransferase (220 aa).

Belongs to the ATP phosphoribosyltransferase family. Short subfamily. As to quaternary structure, heteromultimer composed of HisG and HisZ subunits.

The protein resides in the cytoplasm. The catalysed reaction is 1-(5-phospho-beta-D-ribosyl)-ATP + diphosphate = 5-phospho-alpha-D-ribose 1-diphosphate + ATP. It functions in the pathway amino-acid biosynthesis; L-histidine biosynthesis; L-histidine from 5-phospho-alpha-D-ribose 1-diphosphate: step 1/9. Its function is as follows. Catalyzes the condensation of ATP and 5-phosphoribose 1-diphosphate to form N'-(5'-phosphoribosyl)-ATP (PR-ATP). Has a crucial role in the pathway because the rate of histidine biosynthesis seems to be controlled primarily by regulation of HisG enzymatic activity. This chain is ATP phosphoribosyltransferase, found in Prochlorococcus marinus (strain NATL1A).